Here is a 409-residue protein sequence, read N- to C-terminus: Nucleoprotein (409 aa).

5 disordered regions span residues 1 to 32 (MASG…SSGN), 45 to 69 (NSHP…QQHG), 122 to 145 (DVKS…LRFS), 164 to 194 (RSGR…GSED), and 238 to 259 (VDQV…DKMN). Over residues 15-31 (PVIKLGGPKPPKVGSSG) the composition is skewed to low complexity. The segment at 29-160 (SSGNASWFQA…GNFRWDFIPL (132 aa)) is RNA-binding. The CoV N NTD domain maps to 31-156 (GNASWFQAIK…GGPDGNFRWD (126 aa)). Residues 122–138 (DVKSRSHQGTRDPDKFD) show a composition bias toward basic and acidic residues. The segment covering 164 to 179 (RSGRSTAASSAASSRA) has biased composition (low complexity). 2 stretches are compositionally biased toward basic and acidic residues: residues 180 to 192 (PSRD…RSGS) and 247 to 259 (KGKE…DKMN). A phosphoserine; by host mark is found at serine 190 and serine 192. The CoV N CTD domain maps to 219 to 331 (ADEMAHRRYC…QCVDGVGTRP (113 aa)). The dimerization stretch occupies residues 226–333 (RYCKRTIPPG…VDGVGTRPKD (108 aa)). Cysteines 320 and 323 form a disulfide. The disordered stretch occupies residues 326-409 (GVGTRPKDDE…GDSALGENEL (84 aa)). The span at 341-357 (RSSSRPATRTSSPAPRQ) shows a compositional bias: low complexity. A compositionally biased stretch (basic residues) spans 358–367 (QRPKKEKKPK). A Phosphothreonine; by host modification is found at threonine 378. Serine 379 is modified (phosphoserine; by host).

Belongs to the gammacoronavirus nucleocapsid protein family. In terms of assembly, homooligomer. Both monomeric and oligomeric forms interact with RNA. Interacts with protein M. Interacts with NSP3; this interaction serves to tether the genome to the newly translated replicase-transcriptase complex at a very early stage of infection. ADP-ribosylated. The ADP-ribosylation is retained in the virion during infection. Post-translationally, phosphorylated on serine and threonine residues.

It localises to the virion. It is found in the host endoplasmic reticulum-Golgi intermediate compartment. The protein resides in the host Golgi apparatus. Its function is as follows. Packages the positive strand viral genome RNA into a helical ribonucleocapsid (RNP) and plays a fundamental role during virion assembly through its interactions with the viral genome and membrane protein M. Plays an important role in enhancing the efficiency of subgenomic viral RNA transcription as well as viral replication. This Avian infectious bronchitis virus (strain Arkansas 99) (IBV) protein is Nucleoprotein.